Consider the following 435-residue polypeptide: Gap junction alpha-3 protein (435 aa).

Residues 2–15 (GDWSFLGRLLENAQ) lie within the membrane without spanning it. The Cytoplasmic segment spans residues 16–19 (EHST). Residues 20-40 (VIGKVWLTVLFIFRILVLGAA) form a helical membrane-spanning segment. Over 41 to 71 (AEDVWGDEQSDFTCNTQQPGCENVCYDRAFP) the chain is Extracellular. 3 disulfide bridges follow: Cys54–Cys192, Cys61–Cys186, and Cys65–Cys181. Residues 72-92 (ISHIRFWALQIIFVSTPTLIY) form a helical membrane-spanning segment. Residues 93–152 (LGHVLHIVRMEEKKKEREEEEQLKRESPSPKEPPQDNPSSRDDRGRVRMAGALLRTYVFN) are Cytoplasmic-facing. Positions 108 to 121 (EREEEEQLKRESPS) are enriched in basic and acidic residues. Positions 108–136 (EREEEEQLKRESPSPKEPPQDNPSSRDDR) are disordered. A helical transmembrane segment spans residues 153-173 (IIFKTLFEVGFIAGQYFLYGF). Residues 174–201 (ELKPLYRCDRWPCPNTVDCFISRPTEKT) are Extracellular-facing. A helical transmembrane segment spans residues 202–222 (IFIIFMLAVACASLLLNMLEI). At 223–435 (YHLGWKKLKQ…GRARPEDLAI (213 aa)) the chain is on the cytoplasmic side. The interval 332–435 (AAERQPPALK…GRARPEDLAI (104 aa)) is disordered. Composition is skewed to low complexity over residues 342-389 (AYPA…ALAG) and 415-427 (GRAS…SSGR).

It belongs to the connexin family. Alpha-type (group II) subfamily. As to quaternary structure, a hemichannel or connexon is composed of a hexamer of connexins. A functional gap junction is formed by the apposition of two hemichannels. Forms heteromeric channels with GJA8.

It localises to the cell membrane. The protein resides in the cell junction. It is found in the gap junction. Functionally, structural component of lens fiber gap junctions. Gap junctions are dodecameric channels that connect the cytoplasm of adjoining cells. They are formed by the docking of two hexameric hemichannels, one from each cell membrane. Small molecules and ions diffuse from one cell to a neighboring cell via the central pore. This chain is Gap junction alpha-3 protein (GJA3), found in Homo sapiens (Human).